The sequence spans 322 residues: UDP-N-acetylenolpyruvoylglucosamine reductase (322 aa).

The FAD-binding PCMH-type domain maps to 36–202; the sequence is RAGGPAQVLF…TSVLFEGVPG (167 aa). Arginine 182 is an active-site residue. Serine 231 functions as the Proton donor in the catalytic mechanism. Glutamate 301 is a catalytic residue.

It belongs to the MurB family. FAD serves as cofactor.

The protein localises to the cytoplasm. It catalyses the reaction UDP-N-acetyl-alpha-D-muramate + NADP(+) = UDP-N-acetyl-3-O-(1-carboxyvinyl)-alpha-D-glucosamine + NADPH + H(+). Its pathway is cell wall biogenesis; peptidoglycan biosynthesis. Cell wall formation. The chain is UDP-N-acetylenolpyruvoylglucosamine reductase from Brucella suis (strain ATCC 23445 / NCTC 10510).